The chain runs to 227 residues: Esterase OVCA2 (227 aa).

Residues serine 120, aspartate 180, and histidine 207 each act as charge relay system in the active site.

The protein belongs to the LovG family.

The catalysed reaction is a carboxylic ester + H2O = an alcohol + a carboxylate + H(+). In terms of biological role, exhibits ester hydrolase activity with a strong preference for long-chain alkyl ester substrates and high selectivity against a variety of short, branched, and substituted esters. Is able to hydrolyze ester bonds within a wide range of p-nitrophenyl derivatives (C2-C14) in vitro, with a strong preference toward substrates of &gt;8 carbons. This Danio rerio (Zebrafish) protein is Esterase OVCA2 (ovca2).